The chain runs to 239 residues: tRNA (guanine-N(1)-)-methyltransferase (239 aa).

S-adenosyl-L-methionine is bound by residues glycine 115 and 134–139 (MGDFVL). The tract at residues 210–239 (QQQREQRTQERRPDLWNRWQQIQNPTPPAP) is disordered. Residues 211-224 (QQREQRTQERRPDL) are compositionally biased toward basic and acidic residues.

Belongs to the RNA methyltransferase TrmD family. As to quaternary structure, homodimer.

It localises to the cytoplasm. It catalyses the reaction guanosine(37) in tRNA + S-adenosyl-L-methionine = N(1)-methylguanosine(37) in tRNA + S-adenosyl-L-homocysteine + H(+). Its function is as follows. Specifically methylates guanosine-37 in various tRNAs. This is tRNA (guanine-N(1)-)-methyltransferase from Synechococcus sp. (strain CC9311).